We begin with the raw amino-acid sequence, 504 residues long: 26S proteasome non-ATPase regulatory subunit 3 (504 aa).

The 181-residue stretch at 254–434 (ARYFYYQGRI…GYLQSRENID (181 aa)) folds into the PCI domain. Positions 485-504 (KEEMERQAEESSDNEGDSDF) are disordered. A compositionally biased stretch (acidic residues) spans 494-504 (ESSDNEGDSDF).

Belongs to the proteasome subunit S3 family. In terms of assembly, the 26S proteasome is composed of a core protease, known as the 20S proteasome, capped at one or both ends by the 19S regulatory complex (RC). The RC is composed of at least 18 different subunits in two subcomplexes, the base and the lid, which form the portions proximal and distal to the 20S proteolytic core, respectively.

Functionally, acts as a regulatory subunit of the 26 proteasome which is involved in the ATP-dependent degradation of ubiquitinated proteins. The polypeptide is 26S proteasome non-ATPase regulatory subunit 3 (psmD3) (Dictyostelium discoideum (Social amoeba)).